The sequence spans 62 residues: Photosystem II reaction center protein Z (62 aa).

Met1 carries the post-translational modification N-formylmethionine. At 1–4 (MTIL) the chain is on the lumenal side. A helical membrane pass occupies residues 5 to 25 (FQLALAALVILSFVMVIGVPV). Residues 26 to 36 (AYASPQDWDRS) lie on the Cytoplasmic side of the membrane. Residues 37–58 (KQLIFLGSGLWIALVLVVGVLN) form a helical membrane-spanning segment. Over 59–62 (FFVV) the chain is Lumenal.

The protein belongs to the PsbZ family. PSII is composed of 1 copy each of membrane proteins PsbA, PsbB, PsbC, PsbD, PsbE, PsbF, PsbH, PsbI, PsbJ, PsbK, PsbL, PsbM, PsbT, PsbX, PsbY, PsbZ, Psb30/Ycf12, peripheral proteins PsbO, CyanoQ (PsbQ), PsbU, PsbV and a large number of cofactors. It forms dimeric complexes. Part of a photosystem II (PSII) assembly intermediate complex PSII-I; crystallized from a strain deleted of psbJ, it forms monomeric PSII before addition of the oxygen evolving complex. PSII-I includes 3 assembly factors not found in mature PSII (Psb27, Psb28 and Psb34). PSII binds multiple chlorophylls, carotenoids and specific lipids. is required as a cofactor.

It localises to the cellular thylakoid membrane. Its function is as follows. May control the interaction of photosystem II (PSII) cores with the light-harvesting antenna, regulates electron flow through the 2 photosystem reaction centers. PSII is a light-driven water plastoquinone oxidoreductase, using light energy to abstract electrons from H(2)O, generating a proton gradient subsequently used for ATP formation. In terms of biological role, may also aid in binding of PsbK, Psb30/Ycf12 and the oxygen-evolving complex to PSII, at least in vitro. This is Photosystem II reaction center protein Z from Thermosynechococcus vestitus (strain NIES-2133 / IAM M-273 / BP-1).